Here is a 746-residue protein sequence, read N- to C-terminus: NAD(P)H-quinone oxidoreductase subunit 5, chloroplastic (746 aa).

Helical transmembrane passes span 9–29 (WIIPFIPLPVPILLGVGLLLF), 40–60 (WTFLSIFLLSIVMIFSLYLSI), 89–109 (IDPLTSIMSILITTVGILVLI), 125–145 (FAYMGFFNTSMLGLVTSSNLI), 147–167 (VYFFWELVGMCSYLLIGFWFT), 185–205 (GDFGLLLGILGLYWITGSFEF), 221–241 (VNLLFLTLCAFLLFVGPIAKS), 258–278 (TPISALIHAATMVAAGIFLVA), 280–300 (LLPLFIVIPSIMYIISLIGII), 327–347 (LGYMMLALGMGSYRSALFHLI), 354–374 (ALLFLGSGSIIHSMEAIVGYS), 396–416 (TAFLIGTLSLCGIPPLACFWS), 425–445 (LLFSPIFAIIACSTAGLTAFY), 547–567 (ILFPMLILLLFTLFIGAIGIP), 608–628 (FSVSIAFFGIFIAYCLYKPFY), and 723–743 (YLFLYLSYVLIFLMILLFFYF).

It belongs to the complex I subunit 5 family. NDH is composed of at least 16 different subunits, 5 of which are encoded in the nucleus.

The protein resides in the plastid. It is found in the chloroplast thylakoid membrane. The enzyme catalyses a plastoquinone + NADH + (n+1) H(+)(in) = a plastoquinol + NAD(+) + n H(+)(out). It catalyses the reaction a plastoquinone + NADPH + (n+1) H(+)(in) = a plastoquinol + NADP(+) + n H(+)(out). Functionally, NDH shuttles electrons from NAD(P)H:plastoquinone, via FMN and iron-sulfur (Fe-S) centers, to quinones in the photosynthetic chain and possibly in a chloroplast respiratory chain. The immediate electron acceptor for the enzyme in this species is believed to be plastoquinone. Couples the redox reaction to proton translocation, and thus conserves the redox energy in a proton gradient. The sequence is that of NAD(P)H-quinone oxidoreductase subunit 5, chloroplastic (ndhF) from Olimarabidopsis pumila (Dwarf rocket).